Here is a 776-residue protein sequence, read N- to C-terminus: Angiomotin-like protein 2 (776 aa).

The tract at residues 41-88 (GGAGAGGTGSPQASAEILAPEDTQVLQQATRQEPQGQEHQGGESHLAE) is disordered. Residues 101–307 (GEELPTYEEA…STQTSSAPSG (207 aa)) are required for interaction with CDH5. A Phosphotyrosine modification is found at Tyr-107. Disordered stretches follow at residues 119–142 (AQQA…GHRS), 169–215 (RNGA…QYPH), and 283–309 (GPLG…SGSA). Polar residues predominate over residues 177–192 (HMSSSHSFPQLARNQQ). Over residues 196–213 (PRGPPAEGPEPRGPPPQY) the composition is skewed to pro residues. The segment at 220-307 (HETATAVTDP…STQTSSAPSG (88 aa)) is required for interaction with CDH1. Residues 297-306 (ASTQTSSAPS) show a composition bias toward polar residues. Coiled-coil stretches lie at residues 314–509 (METL…LELR) and 543–570 (ALRL…WEQK). Glycyl lysine isopeptide (Lys-Gly) (interchain with G-Cter in ubiquitin) cross-links involve residues Lys-347 and Lys-408. Disordered stretches follow at residues 591–620 (QRDT…GHRH) and 677–743 (TQGW…LDPD). Residues 678–687 (QGWQSLSSSE) show a composition bias toward polar residues. Phosphoserine occurs at positions 756 and 759. Residues 773–776 (EILI) carry the PDZ-binding motif.

This sequence belongs to the angiomotin family. As to quaternary structure, part of a complex composed of AMOTL2, MAGI1 and CDH5, within the complex AMOTL2 acts as a scaffold protein for the interaction of MAGI1 with CDH5. The complex is required for coupling actin fibers to cell junctions in endothelial cells. Within the complex AMOTL2 (via its N-terminus) interacts with CDH5. Interacts (via N-terminus) with MAGI1. Interacts (via N-terminus) with ACTB; the interaction facilitates binding of cell junction complexes to actin fibers in endothelial cells. Interacts with CDH1; the interaction may facilitate binding of radial actin fibers to cell junction complexes. Interacts with SRC. Interacts with YAP1; the interaction is required for ubiquitination of AMOTL2 and localization of YAP1 to tight junctions. Interacts with WWP1; the interaction facilitates WWP1 interaction with the Crumbs complex and subsequent WWP1 translocation to the plasma membrane. WPP1 interaction with the Crumbs complex promotes WPP1 monoubiquitination of AMOTL2 which subsequently activates the Hippo signaling pathway. When ubiquitinated interacts with LATS2 (via UBA domain); the interaction promotes LATS2 phosphorylation of YAP1. Interacts (via PPXY motif) with WWTR1/TAZ (via WW domain); the interaction promotes WWTR1/TAZ localization to the cytoplasm and thereby inhibition of its transcriptional properties. Interacts with PHLDB2; interaction may facilitate PHLDB2 localization to the myotube podosome cortex that surrounds the core. Monoubiquitinated at Lys-347 and Lys-408 by Crumbs complex-bound WWP1. De-ubiquitinated at Lys-347 and Lys-408 by USP9X; the interaction may be promoted by cell contact inhibition. Deubiquitination of AMOTL2 negatively regulates Hippo signaling activation. In terms of processing, phosphorylation at Tyr-107 is necessary for efficient binding to SRC and synergistically functioning with SRC to activate the downstream MAPK pathway.

The protein localises to the recycling endosome. Its subcellular location is the cytoplasm. It is found in the cell projection. It localises to the podosome. The protein resides in the cell junction. Its function is as follows. Regulates the translocation of phosphorylated SRC to peripheral cell-matrix adhesion sites. Required for proper architecture of actin filaments. Plays a role in coupling actin fibers to cell junctions in endothelial cells and is therefore required for correct endothelial cell morphology via facilitating transcellular transmission of mechanical force resulting in endothelial cell elongation. Required for the anchoring of radial actin fibers to CDH1 junction complexes at the cell membrane which facilitates organization of radial actin fiber structure and cellular response to contractile forces. This contributes to maintenance of cell area, size, shape, epithelial sheet organization and trophectoderm cell properties that facilitate blastocyst zona hatching. Inhibits the Wnt/beta-catenin signaling pathway, probably by recruiting CTNNB1 to recycling endosomes and hence preventing its translocation to the nucleus. Participates in angiogenesis. Activates the Hippo signaling pathway in response to cell contact inhibition via interaction with and ubiquitination by Crumbs complex-bound WWP1. Ubiquitinated AMOTL2 then interacts with LATS2 which in turn phosphorylates YAP1, excluding it from the nucleus and localizing it to the cytoplasm and tight junctions, therefore ultimately repressing YAP1-driven transcription of target genes. Acts to inhibit WWTR1/TAZ transcriptional coactivator activity via sequestering WWTR1/TAZ in the cytoplasm and at tight junctions. Regulates the size and protein composition of the podosome cortex and core at myofibril neuromuscular junctions. Selectively promotes FGF-induced MAPK activation through SRC. May play a role in the polarity, proliferation and migration of endothelial cells. This is Angiomotin-like protein 2 from Canis lupus familiaris (Dog).